The following is a 562-amino-acid chain: Arginine--tRNA ligase (562 aa).

Residues alanine 129–histidine 139 carry the 'HIGH' region motif.

This sequence belongs to the class-I aminoacyl-tRNA synthetase family. In terms of assembly, monomer.

The protein localises to the cytoplasm. The catalysed reaction is tRNA(Arg) + L-arginine + ATP = L-arginyl-tRNA(Arg) + AMP + diphosphate. This Xylella fastidiosa (strain 9a5c) protein is Arginine--tRNA ligase (argS).